A 442-amino-acid polypeptide reads, in one-letter code: 3-phosphoshikimate 1-carboxyvinyltransferase (442 aa).

3-phosphoshikimate contacts are provided by K25, S26, and R30. K25 provides a ligand contact to phosphoenolpyruvate. Positions 96 and 124 each coordinate phosphoenolpyruvate. 3-phosphoshikimate contacts are provided by S171, S172, Q173, S203, D325, and K352. A phosphoenolpyruvate-binding site is contributed by Q173. D325 (proton acceptor) is an active-site residue. Positions 356, 400, and 425 each coordinate phosphoenolpyruvate.

Belongs to the EPSP synthase family. In terms of assembly, monomer.

Its subcellular location is the cytoplasm. The enzyme catalyses 3-phosphoshikimate + phosphoenolpyruvate = 5-O-(1-carboxyvinyl)-3-phosphoshikimate + phosphate. Its pathway is metabolic intermediate biosynthesis; chorismate biosynthesis; chorismate from D-erythrose 4-phosphate and phosphoenolpyruvate: step 6/7. Catalyzes the transfer of the enolpyruvyl moiety of phosphoenolpyruvate (PEP) to the 5-hydroxyl of shikimate-3-phosphate (S3P) to produce enolpyruvyl shikimate-3-phosphate and inorganic phosphate. This Bordetella pertussis (strain Tohama I / ATCC BAA-589 / NCTC 13251) protein is 3-phosphoshikimate 1-carboxyvinyltransferase.